A 391-amino-acid chain; its full sequence is Cyclin-B1-2 (391 aa).

Belongs to the cyclin family. Cyclin AB subfamily.

This is Cyclin-B1-2 (CYCB1-2) from Oryza sativa subsp. japonica (Rice).